The chain runs to 276 residues: Glutamate 5-kinase (276 aa).

K14 is an ATP binding site. 3 residues coordinate substrate: S54, D141, and N157. Residues 177-178 (SD) and 219-225 (TGGMLTK) contribute to the ATP site.

It belongs to the glutamate 5-kinase family.

It is found in the cytoplasm. The enzyme catalyses L-glutamate + ATP = L-glutamyl 5-phosphate + ADP. Its pathway is amino-acid biosynthesis; L-proline biosynthesis; L-glutamate 5-semialdehyde from L-glutamate: step 1/2. Functionally, catalyzes the transfer of a phosphate group to glutamate to form L-glutamate 5-phosphate. This chain is Glutamate 5-kinase, found in Listeria monocytogenes serovar 1/2a (strain ATCC BAA-679 / EGD-e).